The primary structure comprises 217 residues: Large ribosomal subunit protein uL3 (217 aa).

Residues phenylalanine 131–aspartate 155 are disordered. Residues serine 132–asparagine 145 are compositionally biased toward low complexity. Residue glutamine 154 is modified to N5-methylglutamine.

Belongs to the universal ribosomal protein uL3 family. In terms of assembly, part of the 50S ribosomal subunit. Forms a cluster with proteins L14 and L19. In terms of processing, methylated by PrmB.

Its function is as follows. One of the primary rRNA binding proteins, it binds directly near the 3'-end of the 23S rRNA, where it nucleates assembly of the 50S subunit. The chain is Large ribosomal subunit protein uL3 from Nitrosomonas eutropha (strain DSM 101675 / C91 / Nm57).